Here is a 209-residue protein sequence, read N- to C-terminus: Large ribosomal subunit protein uL4 (209 aa).

The interval 46–71 is disordered; it reads GTSSTKTRSEVRGSSKKPWKQKGTGR. A compositionally biased stretch (basic residues) spans 59–71; the sequence is SSKKPWKQKGTGR.

It belongs to the universal ribosomal protein uL4 family. Part of the 50S ribosomal subunit.

Its function is as follows. One of the primary rRNA binding proteins, this protein initially binds near the 5'-end of the 23S rRNA. It is important during the early stages of 50S assembly. It makes multiple contacts with different domains of the 23S rRNA in the assembled 50S subunit and ribosome. Forms part of the polypeptide exit tunnel. The chain is Large ribosomal subunit protein uL4 from Borreliella afzelii (strain PKo) (Borrelia afzelii).